The sequence spans 369 residues: Anhydro-N-acetylmuramic acid kinase (369 aa).

Residue 12–19 participates in ATP binding; it reads GTSLDGVD.

Belongs to the anhydro-N-acetylmuramic acid kinase family.

It catalyses the reaction 1,6-anhydro-N-acetyl-beta-muramate + ATP + H2O = N-acetyl-D-muramate 6-phosphate + ADP + H(+). Its pathway is amino-sugar metabolism; 1,6-anhydro-N-acetylmuramate degradation. It functions in the pathway cell wall biogenesis; peptidoglycan recycling. In terms of biological role, catalyzes the specific phosphorylation of 1,6-anhydro-N-acetylmuramic acid (anhMurNAc) with the simultaneous cleavage of the 1,6-anhydro ring, generating MurNAc-6-P. Is required for the utilization of anhMurNAc either imported from the medium or derived from its own cell wall murein, and thus plays a role in cell wall recycling. This Shigella boydii serotype 4 (strain Sb227) protein is Anhydro-N-acetylmuramic acid kinase.